The following is a 299-amino-acid chain: GTPase Era (299 aa).

The region spanning 5-175 (RSGFVCFVGR…TNVLVSQLPP (171 aa)) is the Era-type G domain. The G1 stretch occupies residues 13-20 (GRPNTGKS). Residue 13-20 (GRPNTGKS) participates in GTP binding. Residues 39–43 (QTTRH) are G2. Residues 60–63 (DTPG) are G3. GTP-binding positions include 60–64 (DTPGL) and 124–127 (TKID). Residues 124 to 127 (TKID) form a G4 region. The tract at residues 154–156 (VSA) is G5. The 80-residue stretch at 206-285 (VRDELPHSLA…YLDLRVKIAK (80 aa)) folds into the KH type-2 domain.

The protein belongs to the TRAFAC class TrmE-Era-EngA-EngB-Septin-like GTPase superfamily. Era GTPase family. In terms of assembly, monomer. Stays in the monomer conformation, irrespective of the presence of GTP.

Its subcellular location is the cell envelope. The protein localises to the secreted. It localises to the cell wall. With respect to regulation, co-purified with RNA upon overexpression in E.coli, but RNAs do not appear to influence the GTPase activity. Its function is as follows. Exhibits GTPase activity. Binds RNA but is probably not involved in ribosome assembly in mycobacteria. Cannot use ATP. In Mycolicibacterium smegmatis (strain ATCC 700084 / mc(2)155) (Mycobacterium smegmatis), this protein is GTPase Era.